The chain runs to 400 residues: Lysophospholipid transporter LplT (400 aa).

Helical transmembrane passes span 19–39 (VIVA…ATLA), 53–73 (VLQM…GQMA), 91–111 (AGAA…LVGI), 139–159 (LMEA…GVLA), 164–184 (IAAL…NLFI), 195–213 (SWRL…VVLW), 227–247 (LFWG…PVAL), 257–277 (YLNA…AKLV), 281–301 (TVSR…IFSL), 304–324 (ALLP…FFVV), 352–372 (NSAM…GVPA), and 373–393 (VAIG…LWIW).

Belongs to the major facilitator superfamily. LplT (TC 2.A.1.42) family.

The protein localises to the cell inner membrane. Catalyzes the facilitated diffusion of 2-acyl-glycero-3-phosphoethanolamine (2-acyl-GPE) into the cell. This Salmonella enteritidis PT4 (strain P125109) protein is Lysophospholipid transporter LplT.